Consider the following 287-residue polypeptide: MASGREIKTKIKSVQNTRKVTRALEMVSASKIRKAQDRMKTSRPYAQAMKQVIGHLAQASTDYQHPFLVEREQVKRVGFIVISSDRGLAGGLNNNLFRKMLGEAKAWQDKGAEVDLVTIGQKASTFFRRVKVNMVGSVTHIGDVPKLESLIGVIKVMLDAFTEGKIDRVYLVYNRFVNTMVQKASFDQLLPLPPAEKQVAHHDWDYLYEPDAATVLEHVMTRYIESLVYQALLENVASEHAARMVAMKAASDNANKLIGTLQLVYNKARQAAITQEISEIVGGAAAV.

It belongs to the ATPase gamma chain family. F-type ATPases have 2 components, CF(1) - the catalytic core - and CF(0) - the membrane proton channel. CF(1) has five subunits: alpha(3), beta(3), gamma(1), delta(1), epsilon(1). CF(0) has three main subunits: a, b and c.

The protein resides in the cell inner membrane. Functionally, produces ATP from ADP in the presence of a proton gradient across the membrane. The gamma chain is believed to be important in regulating ATPase activity and the flow of protons through the CF(0) complex. The polypeptide is ATP synthase gamma chain (Stenotrophomonas maltophilia (strain K279a)).